Reading from the N-terminus, the 184-residue chain is RNA 2',3'-cyclic phosphodiesterase (184 aa).

The Proton donor role is filled by His-40. 2 short sequence motifs (HXTX) span residues 40–43 and 125–128; these read HITL. The Proton acceptor role is filled by His-125.

This sequence belongs to the 2H phosphoesterase superfamily. ThpR family.

The enzyme catalyses a 3'-end 2',3'-cyclophospho-ribonucleotide-RNA + H2O = a 3'-end 2'-phospho-ribonucleotide-RNA + H(+). Hydrolyzes RNA 2',3'-cyclic phosphodiester to an RNA 2'-phosphomonoester. In vitro, ligates 5' and 3' half-tRNA molecules with 2',3'-cyclic phosphate and 5'-hydroxyl termini, respectively, to the product containing the 2'-5' phosphodiester linkage. Ligase activity requires GTP, but GTP hydrolysis is not required for the reaction, which is reversible. Ligase activity is weak compared to the phosphodiesterase activity. The polypeptide is RNA 2',3'-cyclic phosphodiesterase (Pyrococcus furiosus (strain ATCC 43587 / DSM 3638 / JCM 8422 / Vc1)).